The chain runs to 190 residues: A-type ATP synthase subunit E (190 aa).

Belongs to the V-ATPase E subunit family. Has multiple subunits with at least A(3), B(3), C, D, E, F, H, I and proteolipid K(x).

It is found in the cell membrane. Its function is as follows. Component of the A-type ATP synthase that produces ATP from ADP in the presence of a proton gradient across the membrane. In Pyrobaculum islandicum (strain DSM 4184 / JCM 9189 / GEO3), this protein is A-type ATP synthase subunit E.